Reading from the N-terminus, the 233-residue chain is Methylthioribulose-1-phosphate dehydratase (233 aa).

Substrate is bound at residue Cys-91. Residues His-108 and His-110 each contribute to the Zn(2+) site. The Proton donor/acceptor role is filled by Glu-137. Residue His-194 participates in Zn(2+) binding.

Belongs to the aldolase class II family. MtnB subfamily. Requires Zn(2+) as cofactor.

The protein localises to the cytoplasm. It catalyses the reaction 5-(methylsulfanyl)-D-ribulose 1-phosphate = 5-methylsulfanyl-2,3-dioxopentyl phosphate + H2O. It participates in amino-acid biosynthesis; L-methionine biosynthesis via salvage pathway; L-methionine from S-methyl-5-thio-alpha-D-ribose 1-phosphate: step 2/6. Its function is as follows. Catalyzes the dehydration of methylthioribulose-1-phosphate (MTRu-1-P) into 2,3-diketo-5-methylthiopentyl-1-phosphate (DK-MTP-1-P). The protein is Methylthioribulose-1-phosphate dehydratase of Phaeosphaeria nodorum (strain SN15 / ATCC MYA-4574 / FGSC 10173) (Glume blotch fungus).